Reading from the N-terminus, the 249-residue chain is DNA polymerase sliding clamp (249 aa).

The protein belongs to the PCNA family. Homotrimer. The subunits circularize to form a toroid; DNA passes through its center. Replication factor C (RFC) is required to load the toroid on the DNA.

In terms of biological role, sliding clamp subunit that acts as a moving platform for DNA processing. Responsible for tethering the catalytic subunit of DNA polymerase and other proteins to DNA during high-speed replication. This Thermococcus gammatolerans (strain DSM 15229 / JCM 11827 / EJ3) protein is DNA polymerase sliding clamp.